The chain runs to 88 residues: Small ribosomal subunit protein bS20 (88 aa).

Disordered stretches follow at residues 1–25 (MPNI…KAVK) and 68–88 (HKNQ…SLAA).

It belongs to the bacterial ribosomal protein bS20 family.

Binds directly to 16S ribosomal RNA. This is Small ribosomal subunit protein bS20 from Cutibacterium acnes (strain DSM 16379 / KPA171202) (Propionibacterium acnes).